A 230-amino-acid chain; its full sequence is MDLLFASTNPGKLKELRRLVAGLPIRVVSPDELPRALPEVEEDGATFQANAEKKASTYARLAGMAALADDSGLAVDALGGAPGVRSARWSDEEPGPAPASPVCDLAEAAAAELGPVAGRGARDERNNDKLLRSLAGLPDERRGAQYEAVLAVARADGSLVASVAGVCRGRIGHARRGTGGFGYDPLFVPDGQGGRTMAELSAEEKDAISHRGDAFRRIRSLLERLAREGA.

7–12 (STNPGK) is a binding site for substrate. Mg(2+) is bound by residues Glu-41 and Asp-70. Asp-70 serves as the catalytic Proton acceptor. Substrate-binding positions include Ser-71, 181-184 (FGYD), Lys-205, and 210-211 (HR).

The protein belongs to the HAM1 NTPase family. As to quaternary structure, homodimer. It depends on Mg(2+) as a cofactor.

The catalysed reaction is XTP + H2O = XMP + diphosphate + H(+). The enzyme catalyses dITP + H2O = dIMP + diphosphate + H(+). It catalyses the reaction ITP + H2O = IMP + diphosphate + H(+). In terms of biological role, pyrophosphatase that catalyzes the hydrolysis of nucleoside triphosphates to their monophosphate derivatives, with a high preference for the non-canonical purine nucleotides XTP (xanthosine triphosphate), dITP (deoxyinosine triphosphate) and ITP. Seems to function as a house-cleaning enzyme that removes non-canonical purine nucleotides from the nucleotide pool, thus preventing their incorporation into DNA/RNA and avoiding chromosomal lesions. The protein is dITP/XTP pyrophosphatase of Anaeromyxobacter sp. (strain Fw109-5).